The following is a 954-amino-acid chain: Glycine dehydrogenase (decarboxylating) (954 aa).

Lys-704 is subject to N6-(pyridoxal phosphate)lysine.

Belongs to the GcvP family. In terms of assembly, the glycine cleavage system is composed of four proteins: P, T, L and H. Pyridoxal 5'-phosphate serves as cofactor.

It catalyses the reaction N(6)-[(R)-lipoyl]-L-lysyl-[glycine-cleavage complex H protein] + glycine + H(+) = N(6)-[(R)-S(8)-aminomethyldihydrolipoyl]-L-lysyl-[glycine-cleavage complex H protein] + CO2. Functionally, the glycine cleavage system catalyzes the degradation of glycine. The P protein binds the alpha-amino group of glycine through its pyridoxal phosphate cofactor; CO(2) is released and the remaining methylamine moiety is then transferred to the lipoamide cofactor of the H protein. The polypeptide is Glycine dehydrogenase (decarboxylating) (Vibrio vulnificus (strain YJ016)).